A 361-amino-acid polypeptide reads, in one-letter code: Palmitoyltransferase ZDHHC2 (361 aa).

Residues 1–15 (MAPSGSRSFDCWRVL) lie on the Cytoplasmic side of the membrane. Residues 16–36 (YWIPVLFISLIVAWSYYAYVV) form a helical membrane-spanning segment. The Lumenal portion of the chain corresponds to 37-50 (QLCIETIENMGEKT). A helical transmembrane segment spans residues 51–71 (VYLLIYHLLFLMFVWSYWQTI). The Cytoplasmic segment spans residues 72–167 (YSKPMNPLKE…NNCVGFANYK (96 aa)). The 51-residue stretch at 124-174 (RYCDRCLLLKPDRCHHCSACDMCILKMDHHCPWVNNCVGFANYKFFMLFLA) folds into the DHHC domain. Cys-154 (S-palmitoyl cysteine intermediate) is an active-site residue. A helical membrane pass occupies residues 168-188 (FFMLFLAYSLLYCLFVTATDM). Over 189–207 (QYFIQFWTNGLPDTQAKFH) the chain is Lumenal. The chain crosses the membrane as a helical span at residues 208 to 228 (IMFLFFAASTFSVSLAFLFAY). Residues 229-361 (HCWLVCKNRS…NPALTIEKET (133 aa)) are Cytoplasmic-facing. The segment at 296 to 361 (NPDPEQPSIP…NPALTIEKET (66 aa)) is mediates localization to plasma membrane and recycling endosomes. Positions 299–308 (PEQPSIPPGR) are enriched in pro residues. The tract at residues 299–361 (PEQPSIPPGR…NPALTIEKET (63 aa)) is disordered. The span at 331–340 (SRLLNNGQTD) shows a compositional bias: polar residues. The short motif at 333 to 334 (LL) is the Non-canonical dileucine endocytic signal element. The NPxY-like endocytic signal signature appears at 352 to 355 (NPAL).

Belongs to the DHHC palmitoyltransferase family. As to quaternary structure, monomer. Homodimer. The monomeric form has a higher catalytic activity. Post-translationally, autopalmitoylated.

The protein resides in the endoplasmic reticulum membrane. Its subcellular location is the golgi apparatus membrane. It is found in the postsynaptic density. The protein localises to the postsynaptic recycling endosome membrane. It localises to the cell membrane. The catalysed reaction is L-cysteinyl-[protein] + hexadecanoyl-CoA = S-hexadecanoyl-L-cysteinyl-[protein] + CoA. It carries out the reaction L-cysteinyl-[protein] + tetradecanoyl-CoA = S-tetradecanoyl-L-cysteinyl-[protein] + CoA. It catalyses the reaction L-cysteinyl-[protein] + octadecanoyl-CoA = S-octadecanoyl-L-cysteinyl-[protein] + CoA. Its function is as follows. Palmitoyltransferase that catalyzes the addition of palmitate onto various protein substrates and is involved in a variety of cellular processes. Has no stringent fatty acid selectivity and in addition to palmitate can also transfer onto target proteins myristate from tetradecanoyl-CoA and stearate from octadecanoyl-CoA. The protein is Palmitoyltransferase ZDHHC2 of Danio rerio (Zebrafish).